The chain runs to 299 residues: Sulfate adenylyltransferase subunit 2 (299 aa).

The protein belongs to the PAPS reductase family. CysD subfamily. As to quaternary structure, sulfate-activating enzymes, NodP and NodQ, may be physically associated.

It carries out the reaction sulfate + ATP + H(+) = adenosine 5'-phosphosulfate + diphosphate. Proposed to provide activated sulfate for transfer to nod factor. In Rhizobium meliloti (strain 1021) (Ensifer meliloti), this protein is Sulfate adenylyltransferase subunit 2 (nodP).